Consider the following 305-residue polypeptide: Methionyl-tRNA formyltransferase (305 aa).

A (6S)-5,6,7,8-tetrahydrofolate-binding site is contributed by 111–114; that stretch reads SLLP.

Belongs to the Fmt family.

It catalyses the reaction L-methionyl-tRNA(fMet) + (6R)-10-formyltetrahydrofolate = N-formyl-L-methionyl-tRNA(fMet) + (6S)-5,6,7,8-tetrahydrofolate + H(+). Attaches a formyl group to the free amino group of methionyl-tRNA(fMet). The formyl group appears to play a dual role in the initiator identity of N-formylmethionyl-tRNA by promoting its recognition by IF2 and preventing the misappropriation of this tRNA by the elongation apparatus. This Helicobacter acinonychis (strain Sheeba) protein is Methionyl-tRNA formyltransferase.